The sequence spans 207 residues: Urease accessory protein UreE (207 aa).

Positions 171–207 are disordered; it reads HHGHAHSHSHSHDHDHDHDHDHQHGPGCAHGHGHDHH. The segment covering 180-194 has biased composition (basic and acidic residues); sequence HSHDHDHDHDHDHQH.

This sequence belongs to the UreE family.

The protein resides in the cytoplasm. In terms of biological role, involved in urease metallocenter assembly. Binds nickel. Probably functions as a nickel donor during metallocenter assembly. This is Urease accessory protein UreE from Burkholderia lata (strain ATCC 17760 / DSM 23089 / LMG 22485 / NCIMB 9086 / R18194 / 383).